The chain runs to 265 residues: Mlc titration factor A (265 aa).

Zn(2+) is bound by residues H111, H148, H152, and E211.

This sequence belongs to the MtfA family. Interacts with Mlc. Zn(2+) is required as a cofactor.

It is found in the cytoplasm. Functionally, involved in the modulation of the activity of the glucose-phosphotransferase system (glucose-PTS). Interacts with the transcriptional repressor Mlc, preventing its interaction with DNA and leading to the modulation of expression of genes regulated by Mlc, including ptsG, which encodes the PTS system glucose-specific EIICB component. Its function is as follows. Shows zinc-dependent metallopeptidase activity. The polypeptide is Mlc titration factor A (Salmonella enteritidis PT4 (strain P125109)).